A 974-amino-acid chain; its full sequence is Kinase-interacting protein 1 (974 aa).

Residues 10 to 90 (YSWWAASHIR…ERYDHLSKEL (81 aa)) form the NAB domain. The tract at residues 151 to 170 (STASKQKQGKQSSKIEDAAK) is disordered. The stretch at 173-423 (LSKNEAIEEI…DVVNQNSCLR (251 aa)) forms a coiled coil. Positions 586 to 614 (AQPTPAEKGDEKVSAQSGNTSVYETHTQK) are disordered. The span at 599–610 (SAQSGNTSVYET) shows a compositional bias: polar residues. Residues 641 to 697 (NEYTAILKNYKEVTKKLSDIEKKDRDTEFELTLQTRELKSAIAKRDEEIHNLRQKLS) adopt a coiled-coil conformation. Residues 714-740 (LLDPSDPSSARGLKPEDLPQIKDGDDE) are disordered. The segment covering 726–736 (LKPEDLPQIKD) has biased composition (basic and acidic residues). 2 coiled-coil regions span residues 784 to 807 (HQIQKFKTTVHDLQNEISKARDKE) and 882 to 905 (AAKFQGEVLNMKHENKKVREELEA).

Homodimer or homooligomer. Interacts with PRK1. Post-translationally, phosphorylated by PRK1. In terms of tissue distribution, expressed in mature pollen grains and pollen tubes, but not in style, ovary, petal, leaf, root or sepal.

The protein localises to the cytoplasm. In terms of biological role, probably involved in the receptor-like kinase-mediated signal transduction pathway. The polypeptide is Kinase-interacting protein 1 (Petunia integrifolia (Violet-flowered petunia)).